Here is an 887-residue protein sequence, read N- to C-terminus: Alanine--tRNA ligase (887 aa).

The Zn(2+) site is built by H581, H585, C683, and H687.

This sequence belongs to the class-II aminoacyl-tRNA synthetase family. The cofactor is Zn(2+).

It localises to the cytoplasm. It carries out the reaction tRNA(Ala) + L-alanine + ATP = L-alanyl-tRNA(Ala) + AMP + diphosphate. Its function is as follows. Catalyzes the attachment of alanine to tRNA(Ala) in a two-step reaction: alanine is first activated by ATP to form Ala-AMP and then transferred to the acceptor end of tRNA(Ala). Also edits incorrectly charged Ser-tRNA(Ala) and Gly-tRNA(Ala) via its editing domain. The sequence is that of Alanine--tRNA ligase from Ehrlichia ruminantium (strain Gardel).